The following is a 112-amino-acid chain: Large ribosomal subunit protein uL22 (112 aa).

This sequence belongs to the universal ribosomal protein uL22 family. As to quaternary structure, part of the 50S ribosomal subunit.

This protein binds specifically to 23S rRNA; its binding is stimulated by other ribosomal proteins, e.g. L4, L17, and L20. It is important during the early stages of 50S assembly. It makes multiple contacts with different domains of the 23S rRNA in the assembled 50S subunit and ribosome. Its function is as follows. The globular domain of the protein is located near the polypeptide exit tunnel on the outside of the subunit, while an extended beta-hairpin is found that lines the wall of the exit tunnel in the center of the 70S ribosome. The polypeptide is Large ribosomal subunit protein uL22 (Desulfovibrio desulfuricans (strain ATCC 27774 / DSM 6949 / MB)).